The following is a 227-amino-acid chain: Enolase-phosphatase E1 (227 aa).

The protein belongs to the HAD-like hydrolase superfamily. MasA/MtnC family. In terms of assembly, monomer. Requires Mg(2+) as cofactor.

The catalysed reaction is 5-methylsulfanyl-2,3-dioxopentyl phosphate + H2O = 1,2-dihydroxy-5-(methylsulfanyl)pent-1-en-3-one + phosphate. It functions in the pathway amino-acid biosynthesis; L-methionine biosynthesis via salvage pathway; L-methionine from S-methyl-5-thio-alpha-D-ribose 1-phosphate: step 3/6. The protein operates within amino-acid biosynthesis; L-methionine biosynthesis via salvage pathway; L-methionine from S-methyl-5-thio-alpha-D-ribose 1-phosphate: step 4/6. Bifunctional enzyme that catalyzes the enolization of 2,3-diketo-5-methylthiopentyl-1-phosphate (DK-MTP-1-P) into the intermediate 2-hydroxy-3-keto-5-methylthiopentenyl-1-phosphate (HK-MTPenyl-1-P), which is then dephosphorylated to form the acireductone 1,2-dihydroxy-3-keto-5-methylthiopentene (DHK-MTPene). The sequence is that of Enolase-phosphatase E1 from Gluconobacter oxydans (strain 621H) (Gluconobacter suboxydans).